Reading from the N-terminus, the 754-residue chain is Leucine-rich repeat-containing protein 36 (754 aa).

LRR repeat units follow at residues 51–72 (NLRS…QYLC) and 73–94 (SLQD…SRLQ). Positions 107–146 (NPVVRKDTDYRLFAVYTLQTLEKLDDRTVREGERKAAKLH) constitute an LRRCT domain. The segment covering 241–255 (REMPSDNHQEDEFRH) has biased composition (basic and acidic residues). Residues 241 to 270 (REMPSDNHQEDEFRHYSPRQSTVRSPEKMT) are disordered. Positions 600–680 (NDMESLKQKL…EKTVAILHES (81 aa)) form a coiled coil. The tract at residues 702-734 (YSGKALLPPEKGHHLGRSSPFGKSTLSSSSPVA) is disordered. Residues 722–732 (FGKSTLSSSSP) show a composition bias toward polar residues.

The chain is Leucine-rich repeat-containing protein 36 (LRRC36) from Homo sapiens (Human).